A 446-amino-acid chain; its full sequence is MVKKRLPSNDTVFRFETPGSPRKANVEASRSSTDSPSSVFFSSEAENGVEEKKKACRSPTAQSPTPSVEAESPDQKKIISLRSKSSFDGASLASDKNDCKTESKNDPKTERKKSSSSSQYKANMHFHKLFLSVPTEEPLKQSFTCALQKEILYQGKLFVSENWICFHSKVFGKDTKISIPAFSVTLIKKTKTALLVPNALIIATVTDRYIFVSLLSRDSTYKLLKSVCGHLENTSVGNSPNPSSAENSFRADRPSSLPLDFNDEFSDLDGVVQQRRQDMEGYSSSGSQTPESENSRDFHVTESQTVLNVSKGEAKPTRADAHVNRVPEGKAKSLPAQGLSETVGILHKVKSQKCPMLHHILIFYAIVVCALIISTFYMRYRINTLEEQLGLLTSIVDTHNTEQAAPSGLGSQVQFNVEVLCQELTANIVKLEKIQNNLQKLLENGD.

Position 1 is an N-acetylmethionine (Met-1). A disordered region spans residues 1-120 (MVKKRLPSND…RKKSSSSSQY (120 aa)). The segment covering 29 to 43 (SRSSTDSPSSVFFSS) has biased composition (low complexity). The span at 95–113 (DKNDCKTESKNDPKTERKK) shows a compositional bias: basic and acidic residues. Residues 124 to 191 (MHFHKLFLSV…FSVTLIKKTK (68 aa)) form the GRAM domain. The span at 234–247 (TSVGNSPNPSSAEN) shows a compositional bias: polar residues. Positions 234 to 253 (TSVGNSPNPSSAENSFRADR) are disordered. Residues Ser-239, Ser-256, and Ser-266 each carry the phosphoserine modification. A disordered region spans residues 276 to 298 (RQDMEGYSSSGSQTPESENSRDF). Polar residues predominate over residues 282-292 (YSSSGSQTPES).

This is GRAM domain-containing protein 2B (GRAMD2B) from Pongo abelii (Sumatran orangutan).